The chain runs to 370 residues: N-acetyldiaminopimelate deacetylase (370 aa).

The active site involves Asp67. Glu126 acts as the Proton acceptor in catalysis.

The protein belongs to the peptidase M20A family. N-acetyldiaminopimelate deacetylase subfamily.

It catalyses the reaction N-acetyl-(2S,6S)-2,6-diaminopimelate + H2O = (2S,6S)-2,6-diaminopimelate + acetate. It participates in amino-acid biosynthesis; L-lysine biosynthesis via DAP pathway; LL-2,6-diaminopimelate from (S)-tetrahydrodipicolinate (acetylase route): step 3/3. Its function is as follows. Catalyzes the conversion of N-acetyl-diaminopimelate to diaminopimelate and acetate. The protein is N-acetyldiaminopimelate deacetylase of Exiguobacterium sibiricum (strain DSM 17290 / CCUG 55495 / CIP 109462 / JCM 13490 / 255-15).